The following is a 147-amino-acid chain: MHSWVQRLLTTATTAALLLLAACCAASALDAFHVPSVQAQAHVTKINRFHKQLNGNDKVFVFLTAEYENSKNSLNQVSLWDHIIPDKDKANLQVEVKSKYPLIDQGSSLRGKKVQLVLHWHVMPKAGVMIRDRMALSEFNLPDSYTS.

Over 1 to 6 (MHSWVQ) the chain is Cytoplasmic. Residues 7 to 29 (RLLTTATTAALLLLAACCAASAL) traverse the membrane as a helical; Signal-anchor for type II membrane protein segment. Residues 30–147 (DAFHVPSVQA…EFNLPDSYTS (118 aa)) lie on the Lumenal side of the membrane.

The protein belongs to the SPCS3 family. In terms of assembly, component of the signal peptidase complex (SPC) composed of a catalytic subunit SEC11 and three accessory subunits SPCS1, SPCS2 and SPCS3. The complex induces a local thinning of the ER membrane which is used to measure the length of the signal peptide (SP) h-region of protein substrates. This ensures the selectivity of the complex towards h-regions shorter than 18-20 amino acids.

It localises to the endoplasmic reticulum membrane. Functionally, essential component of the signal peptidase complex (SPC) which catalyzes the cleavage of N-terminal signal sequences from nascent proteins as they are translocated into the lumen of the endoplasmic reticulum. Essential for the SPC catalytic activity, possibly by stabilizing and positioning the active center of the complex close to the lumenal surface. This chain is Signal peptidase complex subunit 3, found in Oryza sativa subsp. japonica (Rice).